The sequence spans 165 residues: Large ribosomal subunit protein uL10 (165 aa).

This sequence belongs to the universal ribosomal protein uL10 family. In terms of assembly, part of the ribosomal stalk of the 50S ribosomal subunit. The N-terminus interacts with L11 and the large rRNA to form the base of the stalk. The C-terminus forms an elongated spine to which L12 dimers bind in a sequential fashion forming a multimeric L10(L12)X complex.

Functionally, forms part of the ribosomal stalk, playing a central role in the interaction of the ribosome with GTP-bound translation factors. This chain is Large ribosomal subunit protein uL10, found in Burkholderia multivorans (strain ATCC 17616 / 249).